A 313-amino-acid polypeptide reads, in one-letter code: Porphobilinogen deaminase (313 aa).

Cysteine 242 bears the S-(dipyrrolylmethanemethyl)cysteine mark.

Belongs to the HMBS family. As to quaternary structure, monomer. The cofactor is dipyrromethane.

The catalysed reaction is 4 porphobilinogen + H2O = hydroxymethylbilane + 4 NH4(+). It participates in porphyrin-containing compound metabolism; protoporphyrin-IX biosynthesis; coproporphyrinogen-III from 5-aminolevulinate: step 2/4. Tetrapolymerization of the monopyrrole PBG into the hydroxymethylbilane pre-uroporphyrinogen in several discrete steps. This chain is Porphobilinogen deaminase, found in Escherichia coli O45:K1 (strain S88 / ExPEC).